We begin with the raw amino-acid sequence, 520 residues long: Pleckstrin homology domain-containing family A member 8 (520 aa).

The region spanning 1-93 is the PH domain; that stretch reads MEGVLYKWTN…WLVALGSAKA (93 aa). The residue at position 139 (Thr-139) is a Phosphothreonine. Ser-145 carries the post-translational modification Phosphoserine. The residue at position 153 (Thr-153) is a Phosphothreonine. A compositionally biased stretch (polar residues) spans 255–268; sequence ISSEENTDGNTTVQ. The segment at 255–303 is disordered; that stretch reads ISSEENTDGNTTVQGERMKEDGEENLESHDRDLAQPGSDSVCSPESPWE. Positions 270–287 are enriched in basic and acidic residues; it reads ERMKEDGEENLESHDRDL. The glycolipid transfer protein homology domain stretch occupies residues 311-520; it reads TFFSTMNTSF…IHGLESDEVV (210 aa).

In terms of assembly, homodimer. Interacts with ARF1; the interaction together with phosphatidylinositol 4-phosphate binding is required for FAPP2 GlcCer transfer ability.

The protein localises to the golgi apparatus. Its subcellular location is the trans-Golgi network membrane. It is found in the membrane. Its function is as follows. Cargo transport protein that is required for apical transport from the trans-Golgi network (TGN). Transports AQP2 from the trans-Golgi network (TGN) to sites of AQP2 phosphorylation. Mediates the non-vesicular transport of glucosylceramide (GlcCer) from the trans-Golgi network (TGN) to the plasma membrane and plays a pivotal role in the synthesis of complex glycosphingolipids. Binding of both phosphatidylinositol 4-phosphate (PIP) and ARF1 are essential for the GlcCer transfer ability. Also required for primary cilium formation, possibly by being involved in the transport of raft lipids to the apical membrane, and for membrane tubulation. This Rattus norvegicus (Rat) protein is Pleckstrin homology domain-containing family A member 8 (Plekha8).